Here is a 182-residue protein sequence, read N- to C-terminus: ATP synthase subunit delta (182 aa).

This sequence belongs to the ATPase delta chain family. In terms of assembly, F-type ATPases have 2 components, F(1) - the catalytic core - and F(0) - the membrane proton channel. F(1) has five subunits: alpha(3), beta(3), gamma(1), delta(1), epsilon(1). CF(0) has four main subunits: a(1), b(1), b'(1) and c(10-14). The alpha and beta chains form an alternating ring which encloses part of the gamma chain. F(1) is attached to F(0) by a central stalk formed by the gamma and epsilon chains, while a peripheral stalk is formed by the delta, b and b' chains.

It is found in the cellular thylakoid membrane. In terms of biological role, f(1)F(0) ATP synthase produces ATP from ADP in the presence of a proton or sodium gradient. F-type ATPases consist of two structural domains, F(1) containing the extramembraneous catalytic core and F(0) containing the membrane proton channel, linked together by a central stalk and a peripheral stalk. During catalysis, ATP synthesis in the catalytic domain of F(1) is coupled via a rotary mechanism of the central stalk subunits to proton translocation. This protein is part of the stalk that links CF(0) to CF(1). It either transmits conformational changes from CF(0) to CF(1) or is implicated in proton conduction. The sequence is that of ATP synthase subunit delta from Synechococcus sp. (strain WH7803).